A 613-amino-acid polypeptide reads, in one-letter code: UvrABC system protein C (613 aa).

Positions 29 to 107 (DVAGVYKMLG…IKTLKPKYNI (79 aa)) constitute a GIY-YIG domain. The 36-residue stretch at 217–252 (KELQRELFDSMRKFSDNLDYESAMVYRDRLQALKSI) folds into the UVR domain.

Belongs to the UvrC family. As to quaternary structure, interacts with UvrB in an incision complex.

The protein localises to the cytoplasm. Its function is as follows. The UvrABC repair system catalyzes the recognition and processing of DNA lesions. UvrC both incises the 5' and 3' sides of the lesion. The N-terminal half is responsible for the 3' incision and the C-terminal half is responsible for the 5' incision. In Anaplasma marginale (strain St. Maries), this protein is UvrABC system protein C.